A 594-amino-acid chain; its full sequence is Capsid vertex component 1 (594 aa).

4 disordered regions span residues 52–77 (GRST…DAVG), 176–205 (NKRD…NGSD), 443–468 (ARRQ…SGPP), and 575–594 (GRQE…FDDL). Residues 61 to 76 (GDEDDAPASDDAEDAV) are compositionally biased toward acidic residues.

The protein belongs to the herpesviridae CVC1 protein family. As to quaternary structure, interacts (via C-terminus) with capsid vertex component 2/CVC2.

It localises to the virion. It is found in the host nucleus. In terms of biological role, capsid vertex-specific component that plays a role during viral DNA encapsidation, assuring correct genome cleavage and presumably stabilizing capsids that contain full-length viral genomes. The protein is Capsid vertex component 1 of Homo sapiens (Human).